A 112-amino-acid chain; its full sequence is MAQTLNSYKMAEIMYKILEKKGELTLEDILAQFEISVPSAYNIQRALKAICERHPDECEVQYKNRKTTFKWIKQEQKEEQKQEQTQDNIAKIFDAQPANFEQTDQGFIKAKQ.

In terms of biological role, essential for virus function. This chain is Protein F-112, found in Saccharolobus solfataricus (Sulfolobus solfataricus).